Consider the following 128-residue polypeptide: Protein ripply2 (128 aa).

The segment at 1–64 (MDTTESAESA…ALPSGPGMAE (64 aa)) is disordered. Residues 17 to 28 (PSRSRCPPSAQP) show a composition bias toward low complexity. A WRPW motif motif is present at residues 34–37 (WRPW). The ripply homology domain stretch occupies residues 74 to 109 (HPVRLFWPKSKCYDYLYQEAETLLKNFPIQATISFY).

The protein belongs to the ripply family. As to expression, expressed in the embryonic anterior presomitic mesoderm. First expressed in S-I at 8.5 dpc, where expression is maintained until 13.5 dpc, with an additional stripe of expression sometimes seen in the rostral part of S0 and S-I.

The protein resides in the nucleus. In terms of biological role, plays a role in somitogenesis. Required for somite segregation and establishment of rostrocaudal polarity in somites. This is Protein ripply2 from Mus musculus (Mouse).